The chain runs to 300 residues: Protein MoxJ (300 aa).

A signal peptide spans 1–25 (MSLVNGRRRTAASVVALTAALTALA).

The protein localises to the periplasm. Its function is as follows. May be involved in the assemblage of active methanol dehydrogenase and/or its cofactor PQQ in the periplasm. This is Protein MoxJ (moxJ) from Methylorubrum extorquens (strain ATCC 14718 / DSM 1338 / JCM 2805 / NCIMB 9133 / AM1) (Methylobacterium extorquens).